The primary structure comprises 95 residues: Aspartyl/glutamyl-tRNA(Asn/Gln) amidotransferase subunit C (95 aa).

Belongs to the GatC family. As to quaternary structure, heterotrimer of A, B and C subunits.

It carries out the reaction L-glutamyl-tRNA(Gln) + L-glutamine + ATP + H2O = L-glutaminyl-tRNA(Gln) + L-glutamate + ADP + phosphate + H(+). It catalyses the reaction L-aspartyl-tRNA(Asn) + L-glutamine + ATP + H2O = L-asparaginyl-tRNA(Asn) + L-glutamate + ADP + phosphate + 2 H(+). Allows the formation of correctly charged Asn-tRNA(Asn) or Gln-tRNA(Gln) through the transamidation of misacylated Asp-tRNA(Asn) or Glu-tRNA(Gln) in organisms which lack either or both of asparaginyl-tRNA or glutaminyl-tRNA synthetases. The reaction takes place in the presence of glutamine and ATP through an activated phospho-Asp-tRNA(Asn) or phospho-Glu-tRNA(Gln). In Rhodopseudomonas palustris (strain ATCC BAA-98 / CGA009), this protein is Aspartyl/glutamyl-tRNA(Asn/Gln) amidotransferase subunit C.